We begin with the raw amino-acid sequence, 78 residues long: MTAKATLLVLALVVMATSGVSSASVAGGPVVNSDTVSRSDPERLSTRGCVANCQANQTGIDCIKYCGIGIGRRDITQQ.

The first 22 residues, 1–22 (MTAKATLLVLALVVMATSGVSS), serve as a signal peptide directing secretion. A propeptide spanning residues 23 to 47 (ASVAGGPVVNSDTVSRSDPERLSTR) is cleaved from the precursor. Ile70 is modified (isoleucine amide). Residues 74-78 (DITQQ) constitute a propeptide that is removed on maturation.

In terms of processing, contains 2 disulfide bonds. In terms of tissue distribution, expressed by the venom duct.

The protein localises to the secreted. The polypeptide is Conotoxin Cl14.9 (Californiconus californicus (California cone)).